The sequence spans 239 residues: LexA repressor (239 aa).

Residues 1–40 (MTEAATGPEGADPSRAARSLPGRPPGIRADSSGLTDRQRR) are disordered. The H-T-H motif DNA-binding region spans 58–78 (MREIGQAVGLSSTSSVAHQLM). Residues 89–100 (DPHRPRAYEVRG) are compositionally biased toward basic and acidic residues. The interval 89–116 (DPHRPRAYEVRGSDQPSAQPADTSGKPA) is disordered. Active-site for autocatalytic cleavage activity residues include Ser-163 and Lys-200.

Belongs to the peptidase S24 family. Homodimer.

The catalysed reaction is Hydrolysis of Ala-|-Gly bond in repressor LexA.. Its function is as follows. Represses a number of genes involved in the response to DNA damage (SOS response), including recA and lexA. In the presence of single-stranded DNA, RecA interacts with LexA causing an autocatalytic cleavage which disrupts the DNA-binding part of LexA, leading to derepression of the SOS regulon and eventually DNA repair. The protein is LexA repressor of Streptomyces clavuligerus.